Reading from the N-terminus, the 235-residue chain is Large ribosomal subunit protein uL4 (235 aa).

The interval 45–75 (RAGTASTKTRGEVSGGGRKPWPQKHTGRARH) is disordered. Positions 65–75 (WPQKHTGRARH) are enriched in basic residues.

It belongs to the universal ribosomal protein uL4 family. In terms of assembly, part of the 50S ribosomal subunit.

One of the primary rRNA binding proteins, this protein initially binds near the 5'-end of the 23S rRNA. It is important during the early stages of 50S assembly. It makes multiple contacts with different domains of the 23S rRNA in the assembled 50S subunit and ribosome. In terms of biological role, this protein only weakly controls expression of the E.coli S10 operon. It is incorporated into E.coli ribosomes, however it is not as firmly associated as the endogenous protein. Functionally, forms part of the polypeptide exit tunnel. The polypeptide is Large ribosomal subunit protein uL4 (rplD) (Thermotoga maritima (strain ATCC 43589 / DSM 3109 / JCM 10099 / NBRC 100826 / MSB8)).